We begin with the raw amino-acid sequence, 141 residues long: Hemoglobin subunit alpha-1 (141 aa).

The 141-residue stretch at 1-141 (VLSPEDKNNV…VSTVLTSKYR (141 aa)) folds into the Globin domain. H58 serves as a coordination point for O2. H87 provides a ligand contact to heme b.

It belongs to the globin family. As to quaternary structure, heterotetramer of two alpha chains and two beta chains. In terms of tissue distribution, red blood cells.

Functionally, involved in oxygen transport from the lung to the various peripheral tissues. In Tadarida brasiliensis (Brazilian free-tailed bat), this protein is Hemoglobin subunit alpha-1.